A 268-amino-acid polypeptide reads, in one-letter code: Movement protein (268 aa).

A disordered region spans residues 215 to 243 (GKKSDVRKGKNSSSDRSVPNKNYRNVKDF). Positions 225–237 (NSSSDRSVPNKNY) are enriched in polar residues.

Belongs to the tobamovirus movement protein family. As to quaternary structure, binds to host RBCS at the plasmodesmata; this interaction seems required for viral systemic movement. In resistant plants, interacts with host MBP2C at host microtubules; this interaction prevents virus cell to cell movement. In resistant plants, interacts with host resistance (R) protein (e.g. tomato ToMV resistance protein TM-2(2), AC Q71BG9) at the host plasma membrane; this interaction triggers host defense responses leading to programmed cell death.

The protein resides in the host cytoplasm. Its subcellular location is the host cytoskeleton. The protein localises to the host cell junction. It localises to the host plasmodesma. Transports viral genome to neighboring plant cells directly through plasmosdesmata, without any budding. The movement protein allows efficient cell to cell propagation, by bypassing the host cell wall barrier. Forms a ribonucleoprotein complex with viral RNA. Binds microtubules and modulates microtubule stability. Can bind double-stranded DNA. Triggers host hypersensitive defense reaction in incompatible plants harboring resistance (R) proteins. The sequence is that of Movement protein (MP) from Nicotiana tabacum (Common tobacco).